Reading from the N-terminus, the 718-residue chain is MPTTVSEEIAGYQLTLETGELAKQANGAVKVQYGNTVVLVTATASKEPKDDLNFFPLTVDYEERLYAVGKIPGGFIKREGKPTEKATLTARLTDRPIRPLFPDGFRNPVHIVSTVLSVDQNCPPEIASIIGASAALSISDIPFDGPIASVKVGKVNDEIVVTPDVDEHEESQLDLVVAGTKDAIMMVEAEANELPEDEMLEAIMKAHEEIKKIITMQEQLVEQVGQKKMEVELDLPSDELVSEVEELALEDIEKVLQIKDKLEREDAMDEAKQKVVDHLLEKYNSEENEDEEEELKEKHIKSAFDSILKREMRSRIIHENSRPDGRGQKEIRPVTCDVDLLPNTHGSGLFTRGQTQVLNVCTLGALGDVQILDGLDIEESKRYMHHYNFPPYSVGEAGFMKGPGRREIGHGALAERALKPMIPTEKDFPYTIRLVSEVLESNGSTSMGSVCASSLSLMDAGVPIEKAVSGIAMGLIKEGDQLAILSDIQGIEDFLGDMDFKVAGTEDGITALQMDIKISGTTREILKQALKQGKDGYLHILNIMKQTISEPREELSPLAPRVIKKQIDPDKIRNVIGPGGKMINKIIDETGVKIDIEPDGLIYISSSDAEQAEQAIKAIDELIKEPEVGEVYLGKVVRTEKYGAFVEILPGKEGLVHISELAEDRVGKTEDVAKVGDEILVKIINIDERGRINLSRKQALGEEDGKTNNDDKKSTKKT.

Residues D493 and D499 each coordinate Mg(2+). The KH domain maps to 560–619 (PRVIKKQIDPDKIRNVIGPGGKMINKIIDETGVKIDIEPDGLIYISSSDAEQAEQAIKAI). Residues 629–697 (GEVYLGKVVR…ERGRINLSRK (69 aa)) enclose the S1 motif domain. A disordered region spans residues 695–718 (SRKQALGEEDGKTNNDDKKSTKKT). Over residues 699–718 (ALGEEDGKTNNDDKKSTKKT) the composition is skewed to basic and acidic residues.

The protein belongs to the polyribonucleotide nucleotidyltransferase family. Mg(2+) is required as a cofactor.

It is found in the cytoplasm. It carries out the reaction RNA(n+1) + phosphate = RNA(n) + a ribonucleoside 5'-diphosphate. Its function is as follows. Involved in mRNA degradation. Catalyzes the phosphorolysis of single-stranded polyribonucleotides processively in the 3'- to 5'-direction. This Natranaerobius thermophilus (strain ATCC BAA-1301 / DSM 18059 / JW/NM-WN-LF) protein is Polyribonucleotide nucleotidyltransferase.